Here is an 89-residue protein sequence, read N- to C-terminus: Small ribosomal subunit protein bS20 (89 aa).

The protein belongs to the bacterial ribosomal protein bS20 family.

Binds directly to 16S ribosomal RNA. The sequence is that of Small ribosomal subunit protein bS20 from Phenylobacterium zucineum (strain HLK1).